We begin with the raw amino-acid sequence, 211 residues long: Thymidylate kinase (211 aa).

Position 10–17 (glycine 10–threonine 17) interacts with ATP.

This sequence belongs to the thymidylate kinase family.

It catalyses the reaction dTMP + ATP = dTDP + ADP. Functionally, phosphorylation of dTMP to form dTDP in both de novo and salvage pathways of dTTP synthesis. This Lactococcus lactis subsp. cremoris (strain SK11) protein is Thymidylate kinase.